Here is a 501-residue protein sequence, read N- to C-terminus: E3 ubiquitin-protein ligase TRIM35 (501 aa).

The residue at position 1 (methionine 1) is an N-acetylmethionine. Serine 8 carries the phosphoserine modification. An RING-type zinc finger spans residues 21–61 (CAVCYDPFRDAVTLRCGHNFCRRCVSGCWEVQTTPSCPVCK). The B box-type zinc finger occupies 96 to 137 (RSPRPCRAHRAPLTLFCLEDKELLCCACQADARHQEHRVQPI). Positions 101, 104, 123, and 129 each coordinate Zn(2+). Residues 200 to 252 (VEEQATLDAMKEESRKKHLQAEEKMKQLAEQTEALAREIERLQMEMKEDDMTF) adopt a coiled-coil conformation. Residues 284–495 (LESLQYRVWK…LRICHLRVSI (212 aa)) enclose the B30.2/SPRY domain.

This sequence belongs to the TRIM/RBCC family. As to quaternary structure, interacts with PKM isoform M2, but not isoform M1; this interaction may compete with that between PKM and FGFR1, and hence reduces FGFR1-dependent tyrosine phosphorylation of PKM. Interacts with IRF7; this interaction promotes IRF7 proteasomal degradation. Interacts with TRAF3; this interaction promotes TRAF3 activation. In terms of tissue distribution, widely expressed. Highly expressed in brain, heart, kidney, spleen, skeletal muscle, lung and thymus. Lower expression found in stomach, large intestine and bone marrow.

The protein resides in the cytoplasm. It localises to the nucleus. The enzyme catalyses S-ubiquitinyl-[E2 ubiquitin-conjugating enzyme]-L-cysteine + [acceptor protein]-L-lysine = [E2 ubiquitin-conjugating enzyme]-L-cysteine + N(6)-ubiquitinyl-[acceptor protein]-L-lysine.. It functions in the pathway protein modification; protein ubiquitination. In terms of biological role, E3 ubiquitin-protein ligase that participates in multiple biological processes including cell death, glucose metabolism, and in particular, the innate immune response. Mediates 'Lys-63'-linked polyubiquitination of TRAF3 thereby promoting type I interferon production via RIG-I signaling pathway. Can also catalyze 'Lys-48'-linked polyubiquitination and proteasomal degradation of viral proteins such as influenza virus PB2. Acts as a negative feedback regulator of TLR7- and TLR9-triggered signaling. Mechanistically, promotes the 'Lys-48'-linked ubiquitination of IRF7 and induces its degradation via a proteasome-dependent pathway. Reduces FGFR1-dependent tyrosine phosphorylation of PKM, inhibiting PKM-dependent lactate production, glucose metabolism, and cell growth. This chain is E3 ubiquitin-protein ligase TRIM35 (Trim35), found in Mus musculus (Mouse).